Here is a 212-residue protein sequence, read N- to C-terminus: Uridine kinase (212 aa).

13 to 20 (GASASGKS) contacts ATP.

It belongs to the uridine kinase family.

It is found in the cytoplasm. It carries out the reaction uridine + ATP = UMP + ADP + H(+). It catalyses the reaction cytidine + ATP = CMP + ADP + H(+). Its pathway is pyrimidine metabolism; CTP biosynthesis via salvage pathway; CTP from cytidine: step 1/3. It functions in the pathway pyrimidine metabolism; UMP biosynthesis via salvage pathway; UMP from uridine: step 1/1. This Psychromonas ingrahamii (strain DSM 17664 / CCUG 51855 / 37) protein is Uridine kinase.